Consider the following 393-residue polypeptide: Thermostable carboxypeptidase 1 (393 aa).

Zn(2+)-binding residues include H104, D109, and H245. Catalysis depends on Y302, which acts as the Proton donor. E373 serves as the catalytic Nucleophile.

Belongs to the peptidase M20 family. In terms of assembly, homotetramer. Requires Zn(2+) as cofactor.

Can release basic, acidic, aromatic, and, to a lesser extent, aliphatic amino acids. This Saccharolobus solfataricus (strain ATCC 35092 / DSM 1617 / JCM 11322 / P2) (Sulfolobus solfataricus) protein is Thermostable carboxypeptidase 1 (cpsA1).